A 230-amino-acid polypeptide reads, in one-letter code: Modulator of macroautophagy TMEM150B-A (230 aa).

Position 1 (methionine 1) is a topological domain, cytoplasmic. Residues 2–22 form a helical membrane-spanning segment; that stretch reads WAWALLPICLTIWATAGIWIV. Topologically, residues 23 to 50 are extracellular; that stretch reads YGMSVSNGSVNLSDGFPYISLCGTDPPQ. N-linked (GlcNAc...) asparagine glycans are attached at residues asparagine 29 and asparagine 33. Residues 51-71 form a helical membrane-spanning segment; sequence SCVFGQVLNVGAMLGVWISAI. The Cytoplasmic portion of the chain corresponds to 72–83; the sequence is RFQQIRDYNCHS. The chain crosses the membrane as a helical span at residues 84–104; it reads VLNSVSLAMGILCALGTSIVG. The Extracellular segment spans residues 105-115; that stretch reads NFQQSNQLETH. Residues 116 to 136 traverse the membrane as a helical segment; the sequence is LAGAFLAFVIGNIYFWMQTAL. Topologically, residues 137-150 are cytoplasmic; sequence TYMVKPTHGGCYIG. A helical membrane pass occupies residues 151–171; sequence PIRFCLSVACTALIVLMAVFL. The Extracellular portion of the chain corresponds to 172 to 183; it reads KMNMKSISAICE. The chain crosses the membrane as a helical span at residues 184-204; the sequence is WIVAMILFLLYGLFAVDFWHL. At 205–230 the chain is on the cytoplasmic side; the sequence is DGHYFHVKKRTVIPNEMQVSTVTLSI.

This sequence belongs to the DRAM/TMEM150 family.

It localises to the cell membrane. The protein localises to the endosome membrane. It is found in the cytoplasmic vesicle. The protein resides in the autophagosome membrane. Functionally, modulator of macroautophagy that causes accumulation of autophagosomes under basal conditions and enhances autophagic flux. Represses cell death and promotes long-term clonogenic survival of cells grown in the absence of glucose in a macroautophagy-independent manner. May have some role in extracellular matrix engulfment or growth factor receptor recycling, both of which can modulate cell survival. In Xenopus laevis (African clawed frog), this protein is Modulator of macroautophagy TMEM150B-A.